The chain runs to 156 residues: B3 domain-containing protein At5g26805 (156 aa).

The TF-B3 DNA-binding region spans 57–155 (KFQLPMEKIR…MFCFSVLDGR (99 aa)).

Its subcellular location is the nucleus. The polypeptide is B3 domain-containing protein At5g26805 (Arabidopsis thaliana (Mouse-ear cress)).